Reading from the N-terminus, the 261-residue chain is 14-3-3-like protein A (261 aa).

Belongs to the 14-3-3 family.

The chain is 14-3-3-like protein A from Vicia faba (Broad bean).